Here is a 523-residue protein sequence, read N- to C-terminus: 2-isopropylmalate synthase (523 aa).

Positions 5-267 (VIIFDTTLRD…HTAINHQEIW (263 aa)) constitute a Pyruvate carboxyltransferase domain. Residues D14, H202, H204, and N238 each coordinate Mn(2+). A regulatory domain region spans residues 392 to 523 (RLDYFSVQSG…QHNENNKETV (132 aa)).

This sequence belongs to the alpha-IPM synthase/homocitrate synthase family. LeuA type 1 subfamily. As to quaternary structure, homodimer. Mn(2+) serves as cofactor.

The protein resides in the cytoplasm. It catalyses the reaction 3-methyl-2-oxobutanoate + acetyl-CoA + H2O = (2S)-2-isopropylmalate + CoA + H(+). The protein operates within amino-acid biosynthesis; L-leucine biosynthesis; L-leucine from 3-methyl-2-oxobutanoate: step 1/4. Its function is as follows. Catalyzes the condensation of the acetyl group of acetyl-CoA with 3-methyl-2-oxobutanoate (2-ketoisovalerate) to form 3-carboxy-3-hydroxy-4-methylpentanoate (2-isopropylmalate). This chain is 2-isopropylmalate synthase, found in Shigella flexneri.